A 1222-amino-acid chain; its full sequence is Deubiquitinating protein VCPIP1 (1222 aa).

Residues 1-21 (MSQPPPPPPPLPPPPPPPEAP) are compositionally biased toward pro residues. The segment at 1-36 (MSQPPPPPPPLPPPPPPPEAPQTPSSLASAAASGGL) is disordered. Positions 25 to 36 (SSLASAAASGGL) are enriched in low complexity. The region spanning 208-361 (LIPVHVDGDG…RNHYIPLVGI (154 aa)) is the OTU domain. D216 is a catalytic residue. C219 (nucleophile) is an active-site residue. The active site involves H354. N6-acetyllysine is present on K408. Disordered stretches follow at residues 725–776 (SVMQ…KEKK), 989–1009 (EATT…LGSG), and 1024–1074 (AFQG…VFTA). Phosphoserine is present on residues S747 and S757. Residues 755-771 (PSSAPATPTKAPYSPTT) show a composition bias toward low complexity. Residue T763 is modified to Phosphothreonine. 3 positions are modified to phosphoserine: S768, S994, and S998. Residues 1041 to 1050 (LDPRARETSV) show a composition bias toward basic and acidic residues. Over residues 1057 to 1074 (GTDFSNSSTKTEPSVFTA) the composition is skewed to polar residues. Phosphoserine is present on S1077. Disordered stretches follow at residues 1113 to 1175 (VSSI…TETT) and 1188 to 1222 (ATRS…MDHS). Positions 1143–1157 (VVSSSAKSGSLQTGL) are enriched in polar residues. Residues 1163–1175 (LTGGTENLNTETT) show a composition bias toward low complexity. S1198 carries the phosphoserine modification. The segment covering 1200–1209 (EELEEMDSQD) has biased composition (acidic residues). S1207 bears the Phosphoserine; by ATM mark. Residues 1210–1222 (AEMTNTTEPMDHS) are compositionally biased toward polar residues.

As to quaternary structure, binds VCP and the ternary complex containing STX5A, NSFL1C and VCP. Phosphorylated at Ser-1207 by ATM or ATR following induction of covalent DNA-protein cross-links (DPCs).

It localises to the nucleus. It is found in the cytoplasm. The protein resides in the endoplasmic reticulum. The protein localises to the golgi apparatus. Its subcellular location is the golgi stack. The catalysed reaction is Thiol-dependent hydrolysis of ester, thioester, amide, peptide and isopeptide bonds formed by the C-terminal Gly of ubiquitin (a 76-residue protein attached to proteins as an intracellular targeting signal).. In terms of biological role, deubiquitinating enzyme involved in DNA repair and reassembly of the Golgi apparatus and the endoplasmic reticulum following mitosis. Necessary for VCP-mediated reassembly of Golgi stacks after mitosis. Plays a role in VCP-mediated formation of transitional endoplasmic reticulum (tER). Mediates dissociation of the ternary complex containing STX5A, NSFL1C and VCP. Also involved in DNA repair following phosphorylation by ATM or ATR: acts by catalyzing deubiquitination of SPRTN, thereby promoting SPRTN recruitment to chromatin and subsequent proteolytic cleavage of covalent DNA-protein cross-links (DPCs). Hydrolyzes 'Lys-11'- and 'Lys-48'-linked polyubiquitin chains. Its function is as follows. (Microbial infection) Regulates the duration of C.botulinum neurotoxin type A (BoNT/A) intoxication by catalyzing deubiquitination of Botulinum neurotoxin A light chain (LC), thereby preventing LC degradation by the proteasome, and accelerating botulinum neurotoxin intoxication in patients. This is Deubiquitinating protein VCPIP1 from Homo sapiens (Human).